The following is an 882-amino-acid chain: Translation initiation factor IF-2 (882 aa).

The interval 50–299 is disordered; the sequence is SFKSANTTKP…KERPLPETLV (250 aa). Composition is skewed to basic and acidic residues over residues 60-71 and 84-96; these read STEKDSKNSSRK and RRRD…DNRH. Basic residues predominate over residues 97–108; that stretch reads GNNKRRNNKFKK. Basic and acidic residues-rich tracts occupy residues 109–133, 169–183, 232–242, and 250–263; these read QQND…DLLN, KKVE…EKLE, QKEETKPTRKK, and EVPD…EHSD. Residues 264-277 are compositionally biased toward basic residues; sequence KARRRRNKKNKRIN. The segment covering 278 to 294 has biased composition (basic and acidic residues); that stretch reads QSKEIKKQPTQRKERPL. The region spanning 383 to 552 is the tr-type G domain; sequence KRPPVVTIMG…LLQADVMELK (170 aa). The G1 stretch occupies residues 392–399; it reads GHVDHGKT. 392–399 provides a ligand contact to GTP; sequence GHVDHGKT. Positions 417 to 421 are G2; the sequence is GITQK. The interval 438 to 441 is G3; that stretch reads DTPG. Residues 438-442 and 492-495 each bind GTP; these read DTPGH and NKID. The interval 492-495 is G4; it reads NKID. A G5 region spans residues 528 to 530; the sequence is SAK.

The protein belongs to the TRAFAC class translation factor GTPase superfamily. Classic translation factor GTPase family. IF-2 subfamily.

The protein resides in the cytoplasm. Its function is as follows. One of the essential components for the initiation of protein synthesis. Protects formylmethionyl-tRNA from spontaneous hydrolysis and promotes its binding to the 30S ribosomal subunits. Also involved in the hydrolysis of GTP during the formation of the 70S ribosomal complex. In Lactobacillus gasseri (strain ATCC 33323 / DSM 20243 / BCRC 14619 / CIP 102991 / JCM 1131 / KCTC 3163 / NCIMB 11718 / NCTC 13722 / AM63), this protein is Translation initiation factor IF-2.